A 128-amino-acid polypeptide reads, in one-letter code: Cytochrome c oxidase subunit 5B, mitochondrial (128 aa).

The N-terminal 30 residues, methionine 1–asparagine 30, are a transit peptide targeting the mitochondrion. An N6-acetyllysine mark is found at lysine 67 and lysine 85. Zn(2+) contacts are provided by cysteine 90, cysteine 92, cysteine 112, and cysteine 115. Lysine 120 is subject to N6-acetyllysine.

Belongs to the cytochrome c oxidase 5b family. Expressed in testis. Not expressed in brain, heart, liver, kidney, spleen, lung, duodenum, muscle, epididymis, vagina, uterus and ovary.

It is found in the mitochondrion inner membrane. In terms of biological role, this protein is one of the nuclear-coded polypeptide chains of cytochrome c oxidase, the terminal oxidase in mitochondrial electron transport. This Vulpes vulpes (Red fox) protein is Cytochrome c oxidase subunit 5B, mitochondrial.